We begin with the raw amino-acid sequence, 242 residues long: Tropomyosin-1 (242 aa).

Disordered regions lie at residues 1-31 (MDAIKKKMSAMKTKLEEADKQAQDAEDELTA) and 65-96 (TSLTEKYNEEEKKAEEGRRAHKELENRGQTDY). The stretch at 1 to 242 (MDAIKKKMSA…DELLLELASM (242 aa)) forms a coiled coil. Basic and acidic residues-rich tracts occupy residues 13 to 23 (TKLEEADKQAQ) and 70 to 96 (KYNEEEKKAEEGRRAHKELENRGQTDY).

Belongs to the tropomyosin family. As to quaternary structure, homodimer. As to expression, expressed ubiquitously.

The polypeptide is Tropomyosin-1 (TPM1) (Podocoryna carnea (Hydrozoan)).